A 24-amino-acid polypeptide reads, in one-letter code: GFKDWIKGAAKKLIKTVAANIANQ.

In terms of tissue distribution, expressed by the skin glands.

The protein resides in the secreted. Antimicrobial peptide that shows higher potency against Gram-negative bacteria than against Gram-positive bacteria. Has a very week hemolytic activity. The protein is Ascaphin-4 of Ascaphus truei (Coastal tailed frog).